An 81-amino-acid polypeptide reads, in one-letter code: Putative membrane protein insertion efficiency factor (81 aa).

The protein belongs to the UPF0161 family.

Its subcellular location is the cell membrane. Functionally, could be involved in insertion of integral membrane proteins into the membrane. This chain is Putative membrane protein insertion efficiency factor, found in Geobacillus kaustophilus (strain HTA426).